Reading from the N-terminus, the 846-residue chain is Homeodomain-interacting protein kinase 1 (846 aa).

Residues 47–74 (NPFSIQKAPGTSSDNEQRAPKRRADEEA) are disordered. Over residues 61–72 (NEQRAPKRRADE) the composition is skewed to basic and acidic residues. A Protein kinase domain is found at 147-483 (YEVLEFLGKG…PAEGLESKFV (337 aa)). Residues 153 to 161 (LGKGTFGQV) and Lys-176 contribute to the ATP site. Residue Asp-272 is the Proton acceptor of the active site. The tract at residues 741 to 790 (LAAQPKKNSPAPSVITLSSDEDSNGAGSSNSGSTTRTGAVNPVRNDTLPM) is disordered. Polar residues predominate over residues 746-757 (KKNSPAPSVITL). Over residues 764–773 (NGAGSSNSGS) the composition is skewed to low complexity.

It belongs to the protein kinase superfamily. CMGC Ser/Thr protein kinase family. HIPK subfamily. As to expression, broadly expressed during embryogenesis. Expression becomes more restricted during larval development. L3 larvae display robust expression in many head and motor neurons, and lower levels of expression in the intestine and the seam cells of the hypodermis. By late L4 stage, expression is largely restricted to neurons and is maintained in nerve cells of the head and nerve cord during adulthood. Expressed in adult pharyngeal cells, hypodermal cells, gonadal sheath cells and distal tip cells but not in germline cells. Expressed in serotonergic neurons such as ADF and NSM and in GABAergic neurons, including RME, RIS and DVB.

The protein localises to the nucleus. The enzyme catalyses L-seryl-[protein] + ATP = O-phospho-L-seryl-[protein] + ADP + H(+). It carries out the reaction L-threonyl-[protein] + ATP = O-phospho-L-threonyl-[protein] + ADP + H(+). Serine/threonine-protein kinase required in the somatic gonadal cells to regulate germline proliferation during larval development and in adulthood. Plays a role in the development/differentiation of gonadal distal tip cells. Required for normal lifespan in a pha-4 and mxl-2-dependent manner. Also contributes to survival following heat or oxidative stress. Prevents sumoylation and inactivation of heat shock transcription factor hsf-1 which enhances hsf-1-dependent transcriptional induction of chaperones in response to heat shock. Also required for hormetic extension of longevity in response to heat stress. Also contributes to longevity by promoting autophagy under nutrient stress conditions through induction of autophagosome formation and autophagy gene expression. Provides protection against proteotoxic polyglutamine aggregate and the associated locomotory toxicity, probably as a result of kinase activity. Contributes to longevity via gamma-aminobutyric acid (GABA)ergic signaling by promoting autophagy through mxl-2, hlh-30 and daf-16 but independent of hsf-1 and phas-4, to induce autophagosome formation and the expression of autophagy genes. Promotes thermotolerance via serotonergic signaling by serotonergic neurons. Preserves neuronal function in aging animals by mitigating against age-associated decline in axonal and synaptic transmissions. Acts as an activator of nhr-49-dependent hypoxia response, including the up-regulation of fmo-2 and acs-2, the induction of autophagosome formation and expression of autophagy genes. This is Homeodomain-interacting protein kinase 1 from Caenorhabditis elegans.